A 152-amino-acid polypeptide reads, in one-letter code: Superoxide dismutase [Cu-Zn] (152 aa).

Serine 2 carries the N-acetylserine modification. The Cu cation site is built by histidine 44, histidine 46, and histidine 61. A disulfide bridge links cysteine 55 with cysteine 144. The Zn(2+) site is built by histidine 61, histidine 69, histidine 78, and aspartate 81. Histidine 118 is a binding site for Cu cation.

This sequence belongs to the Cu-Zn superoxide dismutase family. As to quaternary structure, monomer. Requires Cu cation as cofactor. It depends on Zn(2+) as a cofactor.

It localises to the cytoplasm. The catalysed reaction is 2 superoxide + 2 H(+) = H2O2 + O2. Inhibited by KCN and diethyldithiocarbamate. Functionally, destroys radicals which are normally produced within the cells and which are toxic to biological systems. The plasma superoxide dismutase has phagocytosis-stimulating activity and may play an important role in the biological defenses of the organism. The protein is Superoxide dismutase [Cu-Zn] of Halocynthia roretzi (Sea squirt).